Consider the following 366-residue polypeptide: Anthranilate phosphoribosyltransferase (366 aa).

5-phospho-alpha-D-ribose 1-diphosphate contacts are provided by residues Gly79, 82-83 (GD), Thr87, 89-92 (NIST), 107-115 (KHGNRAATS), and Ser119. An anthranilate-binding site is contributed by Gly79. Position 91 (Ser91) interacts with Mg(2+). Position 110 (Asn110) interacts with anthranilate. Arg165 contacts anthranilate. Positions 223 and 224 each coordinate Mg(2+). The tract at residues 342–366 (ESLSGKSMSMRSRTSILSPASGERV) is disordered. The span at 345–359 (SGKSMSMRSRTSILS) shows a compositional bias: polar residues.

Belongs to the anthranilate phosphoribosyltransferase family. Homodimer. Mg(2+) serves as cofactor.

It carries out the reaction N-(5-phospho-beta-D-ribosyl)anthranilate + diphosphate = 5-phospho-alpha-D-ribose 1-diphosphate + anthranilate. The protein operates within amino-acid biosynthesis; L-tryptophan biosynthesis; L-tryptophan from chorismate: step 2/5. Functionally, catalyzes the transfer of the phosphoribosyl group of 5-phosphorylribose-1-pyrophosphate (PRPP) to anthranilate to yield N-(5'-phosphoribosyl)-anthranilate (PRA). This is Anthranilate phosphoribosyltransferase from Methanosarcina barkeri (strain Fusaro / DSM 804).